Consider the following 479-residue polypeptide: Integrin-linked protein kinase 1 (479 aa).

Residues Ser-17 and Ser-26 each carry the phosphoserine modification. Residues 29-73 form a disordered region; it reads FTRQSSLDPRRTNMRFSFGRQSSLDPIRRSPDSSKSDDEPHMSVP. Basic and acidic residues predominate over residues 54 to 69; it reads PIRRSPDSSKSDDEPH. 2 ANK repeats span residues 77-106 and 110-139; these read DSTM…DVNS and DGRT…NIDA. The Protein kinase domain occupies 194–461; that stretch reads LEVQVRKSDG…EIIIRLDKIV (268 aa). ATP is bound by residues 200-208 and Lys-222; that span reads KSDGISKGA. The active-site Proton acceptor is Asp-319.

The protein belongs to the protein kinase superfamily. Ser/Thr protein kinase family. As to quaternary structure, interacts with CML9 and POT5/HAK5. Autophosphorylated at Ser-17 and Ser-26.

The protein localises to the cell membrane. It is found in the endoplasmic reticulum membrane. It carries out the reaction L-seryl-[protein] + ATP = O-phospho-L-seryl-[protein] + ADP + H(+). The catalysed reaction is L-threonyl-[protein] + ATP = O-phospho-L-threonyl-[protein] + ADP + H(+). With respect to regulation, kinase activity is suppressed by interaction with CML9. Functions as a link between plant defense pathways, stress responses and potassium homeostasis. Promotes osmotic stress sensitivity, responses to the bacterial-derived pathogen-associated molecular pattern (PAMP) flg22, and resistance to bacterial pathogens. Promotes the accumulation of POT5/HAK5, a potassium transporter that mediates high-affinity uptake during potassium deficiency. This is Integrin-linked protein kinase 1 from Arabidopsis thaliana (Mouse-ear cress).